The primary structure comprises 82 residues: Cortexin-1 (82 aa).

Positions 1 to 20 (MSAPWTLSPEPLPPSTGPPV) are disordered. Residues 30 to 50 (TVFAFVLCLLVVLVLLMVRCV) traverse the membrane as a helical segment.

Belongs to the cortexin family. Neuron specific.

Its subcellular location is the membrane. May mediate extracellular or intracellular signaling of cortical neurons during forebrain development. This is Cortexin-1 (Ctxn1) from Rattus norvegicus (Rat).